Here is a 110-residue protein sequence, read N- to C-terminus: Endoribonuclease SymE (110 aa).

Positions Ser29–Pro74 constitute a SpoVT-AbrB domain.

The protein belongs to the SymE family.

It localises to the cytoplasm. Its function is as follows. Involved in the degradation and recycling of damaged RNA. It is itself a target for degradation by the ATP-dependent protease Lon. This Salmonella paratyphi C (strain RKS4594) protein is Endoribonuclease SymE.